The sequence spans 288 residues: Nucleotide-binding protein Tola_2941 (288 aa).

An ATP-binding site is contributed by 8–15; sequence GRSGSGKT. 56–59 is a binding site for GTP; it reads DVRN.

Belongs to the RapZ-like family.

Functionally, displays ATPase and GTPase activities. This chain is Nucleotide-binding protein Tola_2941, found in Tolumonas auensis (strain DSM 9187 / NBRC 110442 / TA 4).